Consider the following 65-residue polypeptide: LTCFNCPEVYCNRFHTCRNGEKICFKRFNERKLLGKRYTRGCAATCPVAKPREIVECCSTDRCNH.

Cystine bridges form between cysteine 3–cysteine 24, cysteine 6–cysteine 11, cysteine 17–cysteine 42, cysteine 46–cysteine 57, and cysteine 58–cysteine 63.

Belongs to the three-finger toxin family. Ancestral subfamily. Orphan group II sub-subfamily. As to expression, expressed by the venom gland.

Its subcellular location is the secreted. Its function is as follows. Binds with low affinity to muscular (alpha-1-beta-1-delta-epsilon/CHRNA1-CHRNB1-CHRND-CHRNE) and very low affinity to neuronal (alpha-7/CHRNA7) nicotinic acetylcholine receptor (nAChR). This chain is Weak toxin CM-13b, found in Naja annulifera (Banded Egyptian cobra).